A 400-amino-acid polypeptide reads, in one-letter code: MGVLMSKRQTVEQVQKVSLAVSAFKDGLRDRPSIRRTGELPGSRRGTVEGSVQEVQEEKEAEAGTSVVQEESSAGRAAWERLRDGRGVEPEEFDRTSRFTPPAFIRPTRKLDDDKPPEICLEPREPVVNDEMCDVCEVWTAESLFPCRVCTRVFHDGCLRRMGYIQGDSAAEVTEMAHTETGWSCHYCDNINLLLTEEEMYSLTETFQRCKVIPDCSLTLEDFLRYRHQAAKRGDRDRALSEEQEEQAARQFAALDPEHRGHIEWPDFLSHESLLLLQQLRPQNSLLRLLTVKERERARAAFLARGSGSTVSEAECRRAQHSWFCKRFPEAPSCSVSISHVGPIADSSPASSSSKSQDKTLLPTEQESRFVDWPTFLQENVLYILAARPNSAAIHLKPPG.

The N-myristoyl glycine moiety is linked to residue Gly2. Positions Leu28 to Gly38 are enriched in basic and acidic residues. Positions Leu28–Phe99 are disordered. Residue Arg36 is modified to Omega-N-methylarginine. Position 43 is a phosphoserine (Ser43). Thr47 is modified (phosphothreonine). Phosphoserine is present on Ser51. Residues Ala78–Ser97 show a composition bias toward basic and acidic residues. The PHD-type zinc finger occupies Asn129–Asn190.

In Homo sapiens (Human), this protein is PHD finger protein 24.